The following is a 124-amino-acid chain: Small ribosomal subunit protein uS12c (124 aa).

Positions 105-124 are disordered; the sequence is AGVKDRRQSRSKYGAKRPKA. The segment covering 113–124 has biased composition (basic residues); that stretch reads SRSKYGAKRPKA.

The protein belongs to the universal ribosomal protein uS12 family. In terms of assembly, part of the 30S ribosomal subunit.

It is found in the plastid. It localises to the cyanelle. Its function is as follows. With S4 and S5 plays an important role in translational accuracy. Located at the interface of the 30S and 50S subunits. In Cyanophora paradoxa, this protein is Small ribosomal subunit protein uS12c (rps12).